Reading from the N-terminus, the 33-residue chain is MLLAAVGDDELTDSEDESDLFHEELEDFYDLDL.

The protein is Putative makorin-5 (MKRN9P) of Homo sapiens (Human).